A 268-amino-acid chain; its full sequence is MRAKDIRAKAGDEPITMLTAYDAPTAEIAEAAGVDVLLVGDSVGNTRLGYDSTLPVTVDEMASHTAAVARATDDALVVADMPFLSFGADEADAVDNCGRMLKEADADAVKLECGPHTVSLTKTLSDLGIPVQAHLGLTPQRENETGLYRQGTDEESANRILELAREHEAAGAFSLVLEHVPANLAASVTDALSIPTIGIGAGPDCDGQVLVVDEVVGLAEGTAPFSKRFGDVRGEMREAIEAYTDAVDSGSFPGDEHSHYEDDIEDIY.

The Mg(2+) site is built by Asp-41 and Asp-80. Residues 41-42, Asp-80, and Lys-110 contribute to the 3-methyl-2-oxobutanoate site; that span reads DS. Glu-112 lines the Mg(2+) pocket. The active-site Proton acceptor is Glu-178.

The protein belongs to the PanB family. As to quaternary structure, homodecamer; pentamer of dimers. Mg(2+) is required as a cofactor.

It is found in the cytoplasm. The enzyme catalyses 3-methyl-2-oxobutanoate + (6R)-5,10-methylene-5,6,7,8-tetrahydrofolate + H2O = 2-dehydropantoate + (6S)-5,6,7,8-tetrahydrofolate. It participates in cofactor biosynthesis; coenzyme A biosynthesis. Catalyzes the reversible reaction in which hydroxymethyl group from 5,10-methylenetetrahydrofolate is transferred onto alpha-ketoisovalerate to form ketopantoate. This chain is 3-methyl-2-oxobutanoate hydroxymethyltransferase, found in Natronomonas pharaonis (strain ATCC 35678 / DSM 2160 / CIP 103997 / JCM 8858 / NBRC 14720 / NCIMB 2260 / Gabara) (Halobacterium pharaonis).